Reading from the N-terminus, the 29-residue chain is uncharacterized protein (29 aa).

The tract at residues 1–29 is disordered; it reads MFKMKFGDTLPRSDFGTGGNKQAPGLELG.

This is an uncharacterized protein from Saccharomyces cerevisiae (strain ATCC 204508 / S288c) (Baker's yeast).